The following is a 231-amino-acid chain: 7-cyano-7-deazaguanine synthase (231 aa).

8–18 (FSGGQDSTTCL) provides a ligand contact to ATP. Residues Cys-188, Cys-197, Cys-200, and Cys-203 each coordinate Zn(2+).

The protein belongs to the QueC family. It depends on Zn(2+) as a cofactor.

It carries out the reaction 7-carboxy-7-deazaguanine + NH4(+) + ATP = 7-cyano-7-deazaguanine + ADP + phosphate + H2O + H(+). Its pathway is purine metabolism; 7-cyano-7-deazaguanine biosynthesis. Functionally, catalyzes the ATP-dependent conversion of 7-carboxy-7-deazaguanine (CDG) to 7-cyano-7-deazaguanine (preQ(0)). This Salmonella schwarzengrund (strain CVM19633) protein is 7-cyano-7-deazaguanine synthase.